We begin with the raw amino-acid sequence, 189 residues long: Xanthine phosphoribosyltransferase (189 aa).

2 residues coordinate xanthine: L20 and N27. 5-phospho-alpha-D-ribose 1-diphosphate is bound at residue A128–A132. K156 is a xanthine binding site.

This sequence belongs to the purine/pyrimidine phosphoribosyltransferase family. Xpt subfamily. As to quaternary structure, homodimer.

It is found in the cytoplasm. The enzyme catalyses XMP + diphosphate = xanthine + 5-phospho-alpha-D-ribose 1-diphosphate. It functions in the pathway purine metabolism; XMP biosynthesis via salvage pathway; XMP from xanthine: step 1/1. Converts the preformed base xanthine, a product of nucleic acid breakdown, to xanthosine 5'-monophosphate (XMP), so it can be reused for RNA or DNA synthesis. In Leuconostoc mesenteroides subsp. mesenteroides (strain ATCC 8293 / DSM 20343 / BCRC 11652 / CCM 1803 / JCM 6124 / NCDO 523 / NBRC 100496 / NCIMB 8023 / NCTC 12954 / NRRL B-1118 / 37Y), this protein is Xanthine phosphoribosyltransferase.